Consider the following 428-residue polypeptide: D-amino acid dehydrogenase (428 aa).

3-17 (VVILGSGVVGVASAY) serves as a coordination point for FAD.

This sequence belongs to the DadA oxidoreductase family. The cofactor is FAD.

The enzyme catalyses a D-alpha-amino acid + A + H2O = a 2-oxocarboxylate + AH2 + NH4(+). It functions in the pathway amino-acid degradation; D-alanine degradation; NH(3) and pyruvate from D-alanine: step 1/1. Oxidative deamination of D-amino acids. This Burkholderia thailandensis (strain ATCC 700388 / DSM 13276 / CCUG 48851 / CIP 106301 / E264) protein is D-amino acid dehydrogenase.